A 297-amino-acid polypeptide reads, in one-letter code: Ribosomal RNA small subunit methyltransferase H (297 aa).

Residues 37-39 (GGH), Glu56, Phe87, Asp102, and His109 each bind S-adenosyl-L-methionine.

This sequence belongs to the methyltransferase superfamily. RsmH family.

The protein resides in the cytoplasm. It carries out the reaction cytidine(1402) in 16S rRNA + S-adenosyl-L-methionine = N(4)-methylcytidine(1402) in 16S rRNA + S-adenosyl-L-homocysteine + H(+). Specifically methylates the N4 position of cytidine in position 1402 (C1402) of 16S rRNA. The chain is Ribosomal RNA small subunit methyltransferase H from Borrelia duttonii (strain Ly).